An 88-amino-acid chain; its full sequence is LYR motif-containing protein 2 (88 aa).

Residues 1–19 (MATSRLPPATLTLKQFMRR) constitute a mitochondrion transit peptide.

The protein belongs to the complex I LYR family.

It localises to the mitochondrion. Functionally, involved in efficient integration of the N-module into mitochondrial respiratory chain complex I. This chain is LYR motif-containing protein 2 (LYRM2), found in Bos taurus (Bovine).